The primary structure comprises 486 residues: L-carnitine:corrinoid methyltransferase (486 aa).

This sequence belongs to the trimethylamine methyltransferase family. The L-carnitine:THF methyl transfer system is composed of two methyltransferases, MtcB and MtqA, and the corrinoid protein MtqC.

The enzyme catalyses Co(I)-[quaternary-amine-specific corrinoid protein] + (R)-carnitine + H(+) = (3R)-4-(dimethylamino)-3-hydroxybutanoate + methyl-Co(III)-[quaternary-amine-specific corrinoid protein]. Its function is as follows. Involved in the degradation of the quaternary amine L-carnitine. Component of a corrinoid-dependent methyltransferase system that transfers a methyl group from L-carnitine to tetrahydrofolate (THF), forming methyl-THF, a key intermediate in the Wood-Ljungdahl acetogenesis pathway. MtcB catalyzes the methylation of the corrinoid protein MtqC, using L-carnitine as the methyl donor. L-carnitine demethylation generates the unusual biological product norcarnitine, which is likely degraded by other members of the gut microbiota. In vitro, can methylate free cob(I)alamin. The sequence is that of L-carnitine:corrinoid methyltransferase from Eubacterium limosum.